We begin with the raw amino-acid sequence, 73 residues long: Small proline-rich protein 2G (73 aa).

Low complexity predominate over residues methionine 1 to proline 11. Residues methionine 1 to threonine 20 form a disordered region. 3 repeat units span residues proline 21–proline 29, proline 30–proline 38, and proline 39–proline 47. A 3 X 9 AA approximate tandem repeats region spans residues proline 21–proline 47.

It belongs to the cornifin (SPRR) family.

It is found in the cytoplasm. In terms of biological role, cross-linked envelope protein of keratinocytes. It is a keratinocyte protein that first appears in the cell cytosol, but ultimately becomes cross-linked to membrane proteins by transglutaminase. All that results in the formation of an insoluble envelope beneath the plasma membrane. In Homo sapiens (Human), this protein is Small proline-rich protein 2G (SPRR2G).